A 122-amino-acid chain; its full sequence is Large ribosomal subunit protein uL18 (122 aa).

The protein belongs to the universal ribosomal protein uL18 family. In terms of assembly, part of the 50S ribosomal subunit; part of the 5S rRNA/L5/L18/L25 subcomplex. Contacts the 5S and 23S rRNAs.

Its function is as follows. This is one of the proteins that bind and probably mediate the attachment of the 5S RNA into the large ribosomal subunit, where it forms part of the central protuberance. The protein is Large ribosomal subunit protein uL18 of Prochlorococcus marinus (strain MIT 9515).